We begin with the raw amino-acid sequence, 879 residues long: MAGASSRVHYLSDFCCPLGGRAAGKPFVLRHEAEVFLSTGREFVYVYDQEGGLLTAVYQFPDQVWHLQLLAIRRALYVLCARTGIYCLSLDSLDRSGSQACEDKEEAAPPYPVIHVDPDACVLPDAALCAFTVLDDMLVTLAQGPTQWKMQLFERPCAGEEPLPRGQIGEVELSTCTPPGGVPEKPAAPRFLPVLCCVFPPDSRAPHGHPQGCGCFTLEEALFGLLFGVDATLLQSPVILCGLPDGQLCCVVLKALVTSGLAPGDPKVLVKILHHLEEPVIFIGALRAEPHEEEAAGELLPGQHEHSDCLVALGHQGRTLAIKASWSESGNLVPELREYCLPGPVLCAACDRDGHVYHSTPSDLCVVDLTRRDSPWNPEKPDGAIGGLPSVLCPASLNICSALALCVTARAPTGSTELLALSSKGRLITCSLDLNSEAPVPAKMAMANAGQKIKELLLDIGDVSERVSFLKKAVDQRNKAITSLNEAMNVSCALLSHPEGDRPIACTITTSWSRLELRDMLMATCTLENSSSFSLDQGWTLCIQVLTSSSALDLDGTGSAFTYTIPVDRLGPGSRREVTLPLGPSESGVLDLPVTMSCWLFYSLREVVGAALAPSDPLEAPYLEQFPLSLPKQEGVCLPLCKRTVDMLQCLRFAGAATHPAQAPCMPGPACEPVETFLKTCQAPGSEPTGAASLRAKYLPPSTASIRVSAGLLRAALEDSHSGFHLCSATLRWLLAENAAVDVVRAQTLSSIQGIAPDGTDVNLTVHEVAVTDLSPAGPIQAVEIQVESSSLANMCRAHHAIIRRIQTMVTEQAALGSSPPDLRMQYLQQIHANHQELLREVQALRDQLCTEDELSSCSTAQKLLHIYKQLRNPSLVLL.

In terms of assembly, belongs to the multisubunit FA complex composed of FANCA, FANCB, FANCC, FANCE, FANCF, FANCG, FANCL/PHF9, FANCM, FAAP24 and FAAP100. Forms a subcomplex with FANCB and FANCL.

The protein localises to the nucleus. Its function is as follows. Plays a role in Fanconi anemia-associated DNA damage response network. Regulates FANCD2 monoubiquitination and the stability of the FA core complex. Induces chromosomal instability as well as hypersensitivity to DNA cross-linking agents, when repressed. This chain is Fanconi anemia core complex-associated protein 100, found in Mus musculus (Mouse).